The primary structure comprises 317 residues: Putative S-adenosyl-L-methionine-dependent methyltransferase MSMEG_0093 (317 aa).

S-adenosyl-L-methionine is bound by residues Asp134 and 163–164 (DL).

This sequence belongs to the UPF0677 family.

Exhibits S-adenosyl-L-methionine-dependent methyltransferase activity. The chain is Putative S-adenosyl-L-methionine-dependent methyltransferase MSMEG_0093 from Mycolicibacterium smegmatis (strain ATCC 700084 / mc(2)155) (Mycobacterium smegmatis).